The chain runs to 384 residues: Ferrochelatase, mitochondrial (384 aa).

Cysteine 156 provides a ligand contact to [2Fe-2S] cluster. Active-site residues include histidine 190 and asparagine 343. 3 residues coordinate [2Fe-2S] cluster: cysteine 363, cysteine 366, and cysteine 371.

It belongs to the ferrochelatase family. As to quaternary structure, homodimer. Homotetramer. The cofactor is [2Fe-2S] cluster.

It is found in the mitochondrion inner membrane. It carries out the reaction heme b + 2 H(+) = protoporphyrin IX + Fe(2+). It participates in porphyrin-containing compound metabolism; protoheme biosynthesis; protoheme from protoporphyrin-IX: step 1/1. Catalyzes the ferrous insertion into protoporphyrin IX. Terminal enzyme in heme biosynthesis. Contains four conserved cysteines that function as cluster ligands and play a crucial role in maintaining protein structure. In Drosophila melanogaster (Fruit fly), this protein is Ferrochelatase, mitochondrial.